The primary structure comprises 240 residues: Prolactin-8A6 (240 aa).

Residues 1 to 30 form the signal peptide; that stretch reads MALLLSQPHFSGPLLLLVVSNLLLWEKAAS. Disulfide bonds link Cys34/Cys41, Cys101/Cys216, and Cys233/Cys240. An N-linked (GlcNAc...) asparagine glycan is attached at Asn212.

The protein belongs to the somatotropin/prolactin family. As to expression, expressed specifically in the spongiotrophoblast and trophoblast giant cells from the junctional zone of the chorioallantoic placenta.

Its subcellular location is the secreted. The chain is Prolactin-8A6 (Prl8a6) from Mus musculus (Mouse).